The chain runs to 440 residues: 26S proteasome regulatory subunit 4 (440 aa).

Positions 1–13 are enriched in gly residues; the sequence is MGQSQSGGHGPGG. Positions 1–49 are disordered; the sequence is MGQSQSGGHGPGGGKKDDKDKKKKYEPPVPTRVGKKKKKTKGPDAASKL. Gly2 carries the N-myristoyl glycine lipid modification. Phosphoserine is present on Ser4. Residues 14-26 show a composition bias toward basic and acidic residues; that stretch reads GKKDDKDKKKKYE. The residue at position 53 (Thr53) is a Phosphothreonine. Positions 84–104 are disordered; it reads QMKPLEEKQEEERSKVDDLRG. The segment covering 86-103 has biased composition (basic and acidic residues); that stretch reads KPLEEKQEEERSKVDDLR. ATP is bound at residue 226–233; it reads GPPGTGKT. Residue Lys237 forms a Glycyl lysine isopeptide (Lys-Gly) (interchain with G-Cter in ubiquitin) linkage. At Lys258 the chain carries N6-acetyllysine. Thr434 carries the post-translational modification Phosphothreonine. Tyr439 is subject to Phosphotyrosine.

Belongs to the AAA ATPase family. As to quaternary structure, component of the 19S proteasome regulatory particle complex. The 26S proteasome consists of a 20S core particle (CP) and two 19S regulatory subunits (RP). The regulatory particle is made of a lid composed of 9 subunits, a base containing 6 ATPases including PSMC1 and few additional components. Interacts with SCA7. Interacts with NGLY1. Interacts with PAAF1.

The protein localises to the cytoplasm. Its subcellular location is the nucleus. It is found in the membrane. In terms of biological role, component of the 26S proteasome, a multiprotein complex involved in the ATP-dependent degradation of ubiquitinated proteins. This complex plays a key role in the maintenance of protein homeostasis by removing misfolded or damaged proteins, which could impair cellular functions, and by removing proteins whose functions are no longer required. Therefore, the proteasome participates in numerous cellular processes, including cell cycle progression, apoptosis, or DNA damage repair. PSMC1 belongs to the heterohexameric ring of AAA (ATPases associated with diverse cellular activities) proteins that unfolds ubiquitinated target proteins that are concurrently translocated into a proteolytic chamber and degraded into peptides. In Homo sapiens (Human), this protein is 26S proteasome regulatory subunit 4 (PSMC1).